A 363-amino-acid polypeptide reads, in one-letter code: DNA replication and repair protein RecF (363 aa).

30–37 (GDNAQGKT) is an ATP binding site.

This sequence belongs to the RecF family.

The protein localises to the cytoplasm. In terms of biological role, the RecF protein is involved in DNA metabolism; it is required for DNA replication and normal SOS inducibility. RecF binds preferentially to single-stranded, linear DNA. It also seems to bind ATP. The chain is DNA replication and repair protein RecF from Lachnospira eligens (strain ATCC 27750 / DSM 3376 / VPI C15-48 / C15-B4) (Eubacterium eligens).